An 851-amino-acid chain; its full sequence is DNA mismatch repair protein MutS (851 aa).

614–621 (GPNMGGKS) contributes to the ATP binding site.

It belongs to the DNA mismatch repair MutS family.

In terms of biological role, this protein is involved in the repair of mismatches in DNA. It is possible that it carries out the mismatch recognition step. This protein has a weak ATPase activity. This Yersinia enterocolitica serotype O:8 / biotype 1B (strain NCTC 13174 / 8081) protein is DNA mismatch repair protein MutS.